Here is a 70-residue protein sequence, read N- to C-terminus: U2-agatoxin-Ao1q (70 aa).

Residues 1–20 form the signal peptide; it reads MRSIISLLLISAMVFSMIAA. Residues 21–34 constitute a propeptide that is removed on maturation; that stretch reads VPEEEGLQLSEDER. Cystine bridges form between C44–C58 and C52–C68. L69 carries the post-translational modification Leucine amide.

Belongs to the neurotoxin 01 (U2-agtx) family. Post-translationally, does not contain a cysteine at position 53 which disrupts the cysteine framework. Expressed by the venom gland.

Its subcellular location is the secreted. Insect active toxin causing rapid but reversible paralysis in crickets. No activity shown in mammals. Does not show effect on mammalian voltage-gated calcium channels. The sequence is that of U2-agatoxin-Ao1q from Agelena orientalis (Funnel-web spider).